Here is a 335-residue protein sequence, read N- to C-terminus: Phosphate acyltransferase (335 aa).

This sequence belongs to the PlsX family. In terms of assembly, homodimer. Probably interacts with PlsY.

The protein localises to the cytoplasm. It carries out the reaction a fatty acyl-[ACP] + phosphate = an acyl phosphate + holo-[ACP]. The protein operates within lipid metabolism; phospholipid metabolism. Functionally, catalyzes the reversible formation of acyl-phosphate (acyl-PO(4)) from acyl-[acyl-carrier-protein] (acyl-ACP). This enzyme utilizes acyl-ACP as fatty acyl donor, but not acyl-CoA. This Leptospira interrogans serogroup Icterohaemorrhagiae serovar copenhageni (strain Fiocruz L1-130) protein is Phosphate acyltransferase.